A 252-amino-acid polypeptide reads, in one-letter code: Triosephosphate isomerase (252 aa).

Substrate is bound at residue 10 to 12 (NWK). His96 acts as the Electrophile in catalysis. Catalysis depends on Glu168, which acts as the Proton acceptor. Substrate-binding positions include Gly174, Ser214, and 235-236 (GG).

Belongs to the triosephosphate isomerase family. As to quaternary structure, homodimer.

It localises to the cytoplasm. The catalysed reaction is D-glyceraldehyde 3-phosphate = dihydroxyacetone phosphate. It functions in the pathway carbohydrate biosynthesis; gluconeogenesis. It participates in carbohydrate degradation; glycolysis; D-glyceraldehyde 3-phosphate from glycerone phosphate: step 1/1. Involved in the gluconeogenesis. Catalyzes stereospecifically the conversion of dihydroxyacetone phosphate (DHAP) to D-glyceraldehyde-3-phosphate (G3P). This Lactobacillus acidophilus (strain ATCC 700396 / NCK56 / N2 / NCFM) protein is Triosephosphate isomerase.